Here is a 450-residue protein sequence, read N- to C-terminus: Phosphoglucosamine mutase (450 aa).

The Phosphoserine intermediate role is filled by Ser107. 4 residues coordinate Mg(2+): Ser107, Asp246, Asp248, and Asp250. Ser107 is subject to Phosphoserine.

The protein belongs to the phosphohexose mutase family. The cofactor is Mg(2+). Post-translationally, activated by phosphorylation.

The enzyme catalyses alpha-D-glucosamine 1-phosphate = D-glucosamine 6-phosphate. Functionally, catalyzes the conversion of glucosamine-6-phosphate to glucosamine-1-phosphate. This Dechloromonas aromatica (strain RCB) protein is Phosphoglucosamine mutase.